The chain runs to 352 residues: Histidine protein kinase SaeS (352 aa).

The next 2 membrane-spanning stretches (helical) occupy residues 9–29 and 41–61; these read QIIIGVISSVILTTIILVIAY and TLAITTMITSCLTLSICSIFI. Residues 130 to 349 enclose the Histidine kinase domain; sequence NLAHDLKTPL…TMTLTLKKFQ (220 aa). H133 bears the Phosphohistidine; by autocatalysis mark.

Autophosphorylated.

It is found in the cell membrane. It carries out the reaction ATP + protein L-histidine = ADP + protein N-phospho-L-histidine.. Member of the two-component regulatory system SaeR/SaeS. Probably functions as a membrane-associated protein kinase that upon sensing the appropriate signal, autophosphorylates and in turn activates the cytosolic response regulator SaeR. This chain is Histidine protein kinase SaeS (saeS), found in Staphylococcus epidermidis (strain ATCC 35984 / DSM 28319 / BCRC 17069 / CCUG 31568 / BM 3577 / RP62A).